We begin with the raw amino-acid sequence, 445 residues long: Trigger factor (445 aa).

Residues 164–249 enclose the PPIase FKBP-type domain; sequence GDQVTFDFEG…VKKVEEAKLP (86 aa).

This sequence belongs to the FKBP-type PPIase family. Tig subfamily.

The protein resides in the cytoplasm. It catalyses the reaction [protein]-peptidylproline (omega=180) = [protein]-peptidylproline (omega=0). Functionally, involved in protein export. Acts as a chaperone by maintaining the newly synthesized protein in an open conformation. Functions as a peptidyl-prolyl cis-trans isomerase. The sequence is that of Trigger factor from Psychrobacter sp. (strain PRwf-1).